The following is a 79-amino-acid chain: Small integral membrane protein 40 (79 aa).

Residues 35 to 55 (FFIFLALFLTLLMLEAAYKLL) traverse the membrane as a helical segment.

The protein localises to the membrane. This Homo sapiens (Human) protein is Small integral membrane protein 40.